The following is a 151-amino-acid chain: FAD synthase (151 aa).

Residues 21–22, 26–29, and aspartate 104 each bind ATP; these read TF and HPGH.

This sequence belongs to the archaeal FAD synthase family. Homodimer. A divalent metal cation serves as cofactor.

The enzyme catalyses FMN + ATP + H(+) = FAD + diphosphate. Its pathway is cofactor biosynthesis; FAD biosynthesis; FAD from FMN: step 1/1. Its function is as follows. Catalyzes the transfer of the AMP portion of ATP to flavin mononucleotide (FMN) to produce flavin adenine dinucleotide (FAD) coenzyme. The protein is FAD synthase of Methanosarcina mazei (strain ATCC BAA-159 / DSM 3647 / Goe1 / Go1 / JCM 11833 / OCM 88) (Methanosarcina frisia).